The sequence spans 585 residues: Glucose oxidase-like protein fsoC (585 aa).

Alanine 104 lines the FAD pocket. The Proton donor role is filled by histidine 521. Histidine 564 functions as the Proton acceptor in the catalytic mechanism.

Belongs to the GMC oxidoreductase family. Monomer. FAD serves as cofactor.

Its function is as follows. Glucose oxidase-like protein; part of the gene cluster that mediates the biosynthesis of the enfumafungin-type antibiotic fuscoatroside. Four enzymes are sufficient to produce fuscoatroside: the terpene cyclase-glycosyl transferase fusion protein fsoAthe cytochrome P450 monoxygenases fsoD and fsoE, and the acetyltransferase fsoF; the cytochrome P450 monooxygenase fsoB and the glucose oxidase-like protein fsoC do not seem to play a role in biosynthesis of fuscoatroside. Glucose oxidase; part of the gene cluster that mediates the biosynthesis of the enfumafungin-type antibiotic, fuscoatroside. This is Glucose oxidase-like protein fsoC from Humicola fuscoatra.